The sequence spans 411 residues: Putative odorant receptor 59c (411 aa).

The Cytoplasmic portion of the chain corresponds to 1–46 (MTKFFFKRLQTAPLDQEVSSLDASDYYYRIAFFLGWTPPKGALLRW). The helical transmembrane segment at 47–67 (IYSLWTLTTMWLGIVYLPLGL) threads the bilayer. Topologically, residues 68–86 (SLTYVKHFDRFTPTEFLTS) are extracellular. The helical transmembrane segment at 87–107 (LQVDINCIGNVIKSCVTYSQM) threads the bilayer. At 108–139 (WRFRRMNELISSLDKRCVTTTQRRIFHKMVAR) the chain is on the cytoplasmic side. A helical membrane pass occupies residues 140–160 (VNLIVILFLSTYLGFCFLTLF). Topologically, residues 161–185 (TSVFAGKAPWQLYNPLVDWRKGHWQ) are extracellular. A helical transmembrane segment spans residues 186-206 (LWIASILEYCVVSIGTMQELM). Residues 207 to 271 (SDTYAIVFIS…QIIRPILSIT (65 aa)) lie on the Cytoplasmic side of the membrane. A helical transmembrane segment spans residues 272 to 292 (IFAQFMLVGIDLGLAAISILF). At 293-296 (FPNT) the chain is on the extracellular side. The helical transmembrane segment at 297–317 (IWTIMANVSFIVAICTESFPC) threads the bilayer. The Cytoplasmic segment spans residues 318–369 (CMLCEHLIEDSVHVSNALFHSNWITADRSYKSAVLYFLHRAQQPIQFTAGSI). Residues 370 to 390 (FPISVQSNIAVAKFAFTIITI) traverse the membrane as a helical segment. Topologically, residues 391 to 411 (VNQMNLGEKFFSDRSNGDINP) are extracellular.

It belongs to the insect chemoreceptor superfamily. Heteromeric odorant receptor channel (TC 1.A.69) family. Or2a subfamily. As to quaternary structure, interacts with Orco. Complexes exist early in the endomembrane system in olfactory sensory neurons (OSNs), coupling these complexes to the conserved ciliary trafficking pathway. Expressed in olfactory sensory neurons in the maxillary palp.

It localises to the cell membrane. Functionally, odorant receptor which mediates acceptance or avoidance behavior, depending on its substrates. The odorant receptor repertoire encodes a large collection of odor stimuli that vary widely in identity, intensity, and duration. May form a complex with Orco to form odorant-sensing units, providing sensitive and prolonged odorant signaling and calcium permeability. In Drosophila melanogaster (Fruit fly), this protein is Putative odorant receptor 59c (Or59c).